Here is a 131-residue protein sequence, read N- to C-terminus: D-ribose pyranase (131 aa).

His20 acts as the Proton donor in catalysis. Substrate-binding positions include Asp28, His98, and 120 to 122; that span reads YAN.

The protein belongs to the RbsD / FucU family. RbsD subfamily. As to quaternary structure, homodecamer.

It localises to the cytoplasm. It carries out the reaction beta-D-ribopyranose = beta-D-ribofuranose. Its pathway is carbohydrate metabolism; D-ribose degradation; D-ribose 5-phosphate from beta-D-ribopyranose: step 1/2. Catalyzes the interconversion of beta-pyran and beta-furan forms of D-ribose. This Chloroflexus aggregans (strain MD-66 / DSM 9485) protein is D-ribose pyranase.